Reading from the N-terminus, the 272-residue chain is MRPSELTQLKQDGRAISILTAWDGISAALVEAAGADVVLVGDSLAMVALCHATTLPVTVEQMLHHTKAVGRGFTRPLPQQPLVVCDLPFLSYQCGEDKAVAAAGSLLKHSCAAAVKLEGAEPEVLAVIERLVRMGIPVMGHLGLTPQAVHQLGYRRQAEDPRSQAQMLQQAKQLEQAGCFALVVEHVPSSIARCLSQQLTIPVIGIGAGEDCDGQVRVTADLLGLTPSQPPFSQPLIQGRQLCVEALQGWVKQLHQQAKTATTTTSPPEPDC.

Mg(2+) is bound by residues aspartate 42 and aspartate 86. Residues 42-43 (DS), aspartate 86, and lysine 116 contribute to the 3-methyl-2-oxobutanoate site. Glutamate 118 is a binding site for Mg(2+). Glutamate 185 functions as the Proton acceptor in the catalytic mechanism.

It belongs to the PanB family. As to quaternary structure, homodecamer; pentamer of dimers. Mg(2+) serves as cofactor.

Its subcellular location is the cytoplasm. It carries out the reaction 3-methyl-2-oxobutanoate + (6R)-5,10-methylene-5,6,7,8-tetrahydrofolate + H2O = 2-dehydropantoate + (6S)-5,6,7,8-tetrahydrofolate. The protein operates within cofactor biosynthesis; (R)-pantothenate biosynthesis; (R)-pantoate from 3-methyl-2-oxobutanoate: step 1/2. Catalyzes the reversible reaction in which hydroxymethyl group from 5,10-methylenetetrahydrofolate is transferred onto alpha-ketoisovalerate to form ketopantoate. The chain is 3-methyl-2-oxobutanoate hydroxymethyltransferase from Prochlorococcus marinus (strain MIT 9313).